We begin with the raw amino-acid sequence, 701 residues long: Polyribonucleotide nucleotidyltransferase (701 aa).

2 residues coordinate Mg(2+): D487 and D493. In terms of domain architecture, KH spans 554–613 (PTMLQMKIDSDKIRDVIGKGGATIRGICEETKASIDIEDDGSVKIYGETKEAAEAAKLRV). An S1 motif domain is found at 623 to 691 (GKIYVGKVER…NRGRIKLSIK (69 aa)).

This sequence belongs to the polyribonucleotide nucleotidyltransferase family. Component of the RNA degradosome, which is a multiprotein complex involved in RNA processing and mRNA degradation. It depends on Mg(2+) as a cofactor.

It localises to the cytoplasm. The catalysed reaction is RNA(n+1) + phosphate = RNA(n) + a ribonucleoside 5'-diphosphate. Functionally, involved in mRNA degradation. Catalyzes the phosphorolysis of single-stranded polyribonucleotides processively in the 3'- to 5'-direction. This chain is Polyribonucleotide nucleotidyltransferase, found in Pseudomonas aeruginosa (strain LESB58).